We begin with the raw amino-acid sequence, 99 residues long: Small ribosomal subunit protein eS24 (99 aa).

Belongs to the eukaryotic ribosomal protein eS24 family.

This is Small ribosomal subunit protein eS24 from Pyrococcus abyssi (strain GE5 / Orsay).